The primary structure comprises 586 residues: Chaperone protein HscA homolog (586 aa).

This sequence belongs to the heat shock protein 70 family.

Its function is as follows. Chaperone involved in the maturation of iron-sulfur cluster-containing proteins. Has a low intrinsic ATPase activity which is markedly stimulated by HscB. This is Chaperone protein HscA homolog from Rickettsia typhi (strain ATCC VR-144 / Wilmington).